Here is a 242-residue protein sequence, read N- to C-terminus: MKGLRLGVNIDHVATLRNARGVRYPDPVAAAAIAEQAGADGITIHLREDRRHITDRDVAMLKQTLNVPMNLEMAVTEEMLDIAIKTQPTYSCLVPEKRQELTTEGGLNVAGQLETITDATRRLSDAGIQVSLFIDADHEQIDAAKKAGAPIVELHTGQYAEAETEEQRTVELARLMEASEYAHSIGLQVNVGHGLHYHNTLEVAEIPQVCELNIGHSIIARAVLVGLDQAVRDMRNILDKAR.

Asn-9 lines the 3-amino-2-oxopropyl phosphate pocket. 1-deoxy-D-xylulose 5-phosphate is bound at residue 11 to 12 (DH). A 3-amino-2-oxopropyl phosphate-binding site is contributed by Arg-20. His-45 (proton acceptor) is an active-site residue. Residues Arg-47 and His-52 each contribute to the 1-deoxy-D-xylulose 5-phosphate site. Residue Glu-72 is the Proton acceptor of the active site. Thr-102 is a 1-deoxy-D-xylulose 5-phosphate binding site. Catalysis depends on His-193, which acts as the Proton donor. 3-amino-2-oxopropyl phosphate is bound by residues Gly-194 and 215-216 (GH).

This sequence belongs to the PNP synthase family. Homooctamer; tetramer of dimers.

It localises to the cytoplasm. The catalysed reaction is 3-amino-2-oxopropyl phosphate + 1-deoxy-D-xylulose 5-phosphate = pyridoxine 5'-phosphate + phosphate + 2 H2O + H(+). The protein operates within cofactor biosynthesis; pyridoxine 5'-phosphate biosynthesis; pyridoxine 5'-phosphate from D-erythrose 4-phosphate: step 5/5. In terms of biological role, catalyzes the complicated ring closure reaction between the two acyclic compounds 1-deoxy-D-xylulose-5-phosphate (DXP) and 3-amino-2-oxopropyl phosphate (1-amino-acetone-3-phosphate or AAP) to form pyridoxine 5'-phosphate (PNP) and inorganic phosphate. In Idiomarina loihiensis (strain ATCC BAA-735 / DSM 15497 / L2-TR), this protein is Pyridoxine 5'-phosphate synthase.